The primary structure comprises 333 residues: tRNA N6-adenosine threonylcarbamoyltransferase (333 aa).

Fe cation is bound by residues His111 and His115. Residues Leu134 to Gly138, Asp167, Gly180, and Asn272 contribute to the substrate site. Residue Asp300 participates in Fe cation binding.

The protein belongs to the KAE1 / TsaD family. The cofactor is Fe(2+).

The protein localises to the cytoplasm. It carries out the reaction L-threonylcarbamoyladenylate + adenosine(37) in tRNA = N(6)-L-threonylcarbamoyladenosine(37) in tRNA + AMP + H(+). Required for the formation of a threonylcarbamoyl group on adenosine at position 37 (t(6)A37) in tRNAs that read codons beginning with adenine. Is involved in the transfer of the threonylcarbamoyl moiety of threonylcarbamoyl-AMP (TC-AMP) to the N6 group of A37, together with TsaE and TsaB. TsaD likely plays a direct catalytic role in this reaction. In Legionella pneumophila (strain Paris), this protein is tRNA N6-adenosine threonylcarbamoyltransferase.